We begin with the raw amino-acid sequence, 1355 residues long: Patatin-like phospholipase domain-containing protein 6 (1355 aa).

Residues 1–43 (MGTPSHELNTTSSGAEVIQKTLEEGLGRRICVAQPVPFVPQVL) lie on the Lumenal side of the membrane. A glycan (N-linked (GlcNAc...) asparagine) is linked at asparagine 9. The chain crosses the membrane as a helical span at residues 44–64 (GVMIGAGVAVLVTAVLILLVV). Residues 65–1355 (RRLRVQKTPA…QETPSSVADA (1291 aa)) are Cytoplasmic-facing. 179–306 (VLGHFEKPLF…VRVVQIIMVR (128 aa)) serves as a coordination point for a nucleoside 3',5'-cyclic phosphate. At serine 338 the chain carries Phosphoserine. A disordered region spans residues 338–395 (SPGLPTRTSPVRGSKRVVSTSGTEDTSKETSGRPLDSIGAPLPGPAGDPVKPTSLEAP). Polar residues predominate over residues 343 to 361 (TRTSPVRGSKRVVSTSGTE). Residue threonine 345 is modified to Phosphothreonine. 3 positions are modified to phosphoserine: serine 346, serine 356, and serine 405. A nucleoside 3',5'-cyclic phosphate-binding positions include 492–614 (ELAK…VAAR) and 610–730 (TVAA…LSQK). The region spanning 961 to 1127 (LVLGGGGARG…INNLPADIAR (167 aa)) is the PNPLA domain. The short motif at 965-970 (GGGARG) is the GXGXXG element. Positions 992–996 (GTSIG) match the GXSXG motif. Catalysis depends on serine 994, which acts as the Nucleophile. Residue aspartate 1114 is the Proton acceptor of the active site. Residues 1114-1116 (DGG) carry the DGA/G motif. The interval 1286–1355 (SYVSDGCADG…QETPSSVADA (70 aa)) is disordered. A compositionally biased stretch (acidic residues) spans 1293–1309 (ADGEESDCLTEYEEDAG).

It belongs to the NTE family. In terms of processing, glycosylated. Expressed in brain, testes and kidney (at protein level). Expressed ubiquitously in brain of young mice. Reaching adulthood, there is a most prominent expression in Purkinje cells, granule cells and pyramidal neurons of the hippocampus and some large neurons in the medulla oblongata, nucleus dentatus and pons.

The protein localises to the endoplasmic reticulum membrane. The catalysed reaction is a 1-acyl-sn-glycero-3-phosphocholine + H2O = sn-glycerol 3-phosphocholine + a fatty acid + H(+). The enzyme catalyses 1-hexadecanoyl-sn-glycero-3-phosphocholine + H2O = sn-glycerol 3-phosphocholine + hexadecanoate + H(+). It catalyses the reaction 1-hexadecanoyl-sn-glycero-3-phosphate + H2O = sn-glycerol 3-phosphate + hexadecanoate + H(+). It carries out the reaction 1-(9Z-octadecenoyl)-sn-glycero-3-phosphocholine + H2O = sn-glycerol 3-phosphocholine + (9Z)-octadecenoate + H(+). The catalysed reaction is 1-hexadecanoylglycerol + H2O = glycerol + hexadecanoate + H(+). The enzyme catalyses 2-hexadecanoylglycerol + H2O = glycerol + hexadecanoate + H(+). It catalyses the reaction 1-(9Z-octadecenoyl)-glycerol + H2O = glycerol + (9Z)-octadecenoate + H(+). It carries out the reaction 2-(9Z-octadecenoyl)-glycerol + H2O = glycerol + (9Z)-octadecenoate + H(+). The catalysed reaction is 2-(5Z,8Z,11Z,14Z-eicosatetraenoyl)-glycerol + H2O = glycerol + (5Z,8Z,11Z,14Z)-eicosatetraenoate + H(+). With respect to regulation, inhibited by a series a OPs such as mipafox (MPX), phenyl saligenin phosphate (PSP), phenyl dipentyl phosphinate (PDPP), diisopropyl fluorophosphate and paraoxon. In terms of biological role, phospholipase B that deacylates intracellular phosphatidylcholine (PtdCho), generating glycerophosphocholine (GroPtdCho). This deacylation occurs at both sn-2 and sn-1 positions of PtdCho. Catalyzes the hydrolysis of several naturally occurring membrane-associated lipids. Hydrolyzes lysophospholipids and monoacylglycerols, preferring the 1-acyl to the 2-acyl isomer. Does not catalyze hydrolysis of di- or triacylglycerols or fatty acid amides. The protein is Patatin-like phospholipase domain-containing protein 6 (Pnpla6) of Mus musculus (Mouse).